The chain runs to 567 residues: Chaperone ric-8 (567 aa).

The protein belongs to the synembryn family.

The protein resides in the cytoplasm. It is found in the cell cortex. Chaperone that specifically binds and folds some, but not all, nascent G alpha proteins prior to G protein heterotrimer formation, promoting their stability and activity. Also acts as a guanine nucleotide exchange factor (GEF) for G alpha proteins by stimulating exchange of bound GDP for free GTP. Able to facilitate synaptic transmission in the nervous system probably by activating G(q)-alpha (egl-30). Also able to activate the G(s)-alpha in synaptic signaling network. Plays a key role in asymmetric spindle positioning, a step for asymmetric cell division that generates cell diversity during development by activating G(i)-alpha protein goa-1 and gpa-16 independently of G-protein coupled receptors. While it acts as a GEF for goa-1, it has no GEF activity toward gpa-16. In addition to its GEF activity, it is required for cortical subcellular localization of G-alpha proteins such as gpa-16. Also required for the interaction of goa-1 and gpr-1/2, suggesting that it may act by generating G-alpha proteins free from G-beta-gamma subunits, enabling gpr-1/2 to mediate asymmetric cell division. The chain is Chaperone ric-8 (ric-8) from Caenorhabditis briggsae.